Reading from the N-terminus, the 872-residue chain is Cadherin-1 (872 aa).

The N-terminal stretch at 1 to 25 (MGLKRPWLLGAVVLLTLIQVQGGLA) is a signal peptide. Residues 26–148 (EWTQCRMGFS…SETGLKRQKR (123 aa)) constitute a propeptide that is removed on maturation. 5 Cadherin domains span residues 148–256 (RDWV…DPVF), 257–370 (TQSV…PPVF), 371–481 (DPTQ…APIF), 482–589 (LPPV…GPFL), and 605–688 (VFTI…MQCE). Over 149–701 (DWVIPPIIVS…AIAGGLGISA (553 aa)) the chain is Extracellular. N-linked (GlcNAc...) asparagine glycosylation occurs at N209. The Ca(2+) site is built by D251 and D282. Residues N456, N552, N631, and N669 are each glycosylated (N-linked (GlcNAc...) asparagine). Residues 702–722 (IVGILGGILALLLLLLLLLLF) traverse the membrane as a helical segment. Residues 723–872 (VRRKKVVKEP…LADMYGGDED (150 aa)) are Cytoplasmic-facing. Residues 739 to 758 (ETRDNVFSYDEEGGGEEDQD) are disordered. Over residues 747-758 (YDEEGGGEEDQD) the composition is skewed to acidic residues.

In terms of assembly, homodimer. As to expression, abundantly expressed in intestine, stomach, liver, kidney, skin and eye. Also expressed in heart, lung, testis, ovary, muscle and brain.

The protein localises to the cell junction. It localises to the adherens junction. Its subcellular location is the cell membrane. The protein resides in the endosome. It is found in the golgi apparatus. The protein localises to the trans-Golgi network. It localises to the cytoplasm. Its subcellular location is the desmosome. Cadherins are calcium-dependent cell adhesion proteins. They preferentially interact with themselves in a homophilic manner in connecting cells; cadherins may thus contribute to the sorting of heterogeneous cell types. Promotes organization of radial actin fiber structure and cellular response to contractile forces, via anchoring of radial actin fibers to CDH1 junction complexes at the cell membrane. E-cadherin is a ligand for integrin alpha-E/beta-7. In Xenopus laevis (African clawed frog), this protein is Cadherin-1 (cdh1).